We begin with the raw amino-acid sequence, 397 residues long: Nicotinate phosphoribosyltransferase (397 aa).

His-221 is subject to Phosphohistidine; by autocatalysis.

Belongs to the NAPRTase family. In terms of processing, transiently phosphorylated on a His residue during the reaction cycle. Phosphorylation strongly increases the affinity for substrates and increases the rate of nicotinate D-ribonucleotide production. Dephosphorylation regenerates the low-affinity form of the enzyme, leading to product release.

It carries out the reaction nicotinate + 5-phospho-alpha-D-ribose 1-diphosphate + ATP + H2O = nicotinate beta-D-ribonucleotide + ADP + phosphate + diphosphate. Its pathway is cofactor biosynthesis; NAD(+) biosynthesis; nicotinate D-ribonucleotide from nicotinate: step 1/1. Catalyzes the synthesis of beta-nicotinate D-ribonucleotide from nicotinate and 5-phospho-D-ribose 1-phosphate at the expense of ATP. The polypeptide is Nicotinate phosphoribosyltransferase (Herminiimonas arsenicoxydans).